A 426-amino-acid polypeptide reads, in one-letter code: MSLRVQNILINSLRQYSKQILKPPGYASPEKTNHLKKFLVDKIRVSGPITVAEYMKTCVSAPLVGYYGQFSKDQKVFGAKGDFITSPELTQLFGEMIGVWVFHELANTGHKGSWQLVELGPGRAQLMNDVLNALAKFNDKDVSVHLVETSDALIDEQEKSLCIYTSKNSIDTPFIRKNKTRTGVNIYWYKSIDDIPDGFTVFIGNEFLDALPIHQFHKSGDSWNEVYVNLTKDGDLCFMKSKGENLHTKGLIPSAIRDDSSRVTWECSPESGTVVNQIVDRITTFGGFSLLVDYGHDGSRNTHSFRAYKNHKQVDTLENPGLADLTADVDFGYLSTLVKDRVVIYGPNEQREFLAQLGIEHRLRRLLQVCKDRKQQEQLIESYNMLMGDMGLKFKAWALFPKTLEFILEQRGGPAGFSAKKKTTEN.

It belongs to the NDUFAF7 family.

The protein localises to the mitochondrion. It carries out the reaction L-arginyl-[protein] + 2 S-adenosyl-L-methionine = N(omega),N(omega)'-dimethyl-L-arginyl-[protein] + 2 S-adenosyl-L-homocysteine + 2 H(+). Functionally, arginine methyltransferase involved in the assembly or stability of mitochondrial NADH:ubiquinone oxidoreductase complex (complex I). In Caenorhabditis elegans, this protein is Protein arginine methyltransferase NDUFAF7 homolog, mitochondrial.